The chain runs to 134 residues: Probable salivary secreted peptide (134 aa).

The first 24 residues, 1 to 24 (MGAQKTIAYLAIIAIAVIFAQVNT), serve as a signal peptide directing secretion.

The protein localises to the secreted. This chain is Probable salivary secreted peptide, found in Bombus ignitus (Bumblebee).